Consider the following 65-residue polypeptide: Large ribosomal subunit protein bL35 (65 aa).

It belongs to the bacterial ribosomal protein bL35 family.

In Clostridium acetobutylicum (strain ATCC 824 / DSM 792 / JCM 1419 / IAM 19013 / LMG 5710 / NBRC 13948 / NRRL B-527 / VKM B-1787 / 2291 / W), this protein is Large ribosomal subunit protein bL35.